We begin with the raw amino-acid sequence, 184 residues long: uncharacterized protein (184 aa).

The region spanning 36–164 (LRHRATYIVV…TPDSLKALAL (129 aa)) is the Nudix hydrolase domain. Residues 73–95 (GGVVQADEQLLESARREAEEELG) carry the Nudix box motif. Mg(2+) is bound by residues glutamate 89 and glutamate 93.

This sequence belongs to the Nudix hydrolase family. Mg(2+) is required as a cofactor.

This is an uncharacterized protein from Salmonella typhi.